The primary structure comprises 310 residues: Small ribosomal subunit protein uS2 (310 aa).

2 disordered regions span residues 213–240 and 271–310; these read EEQAALARQQEEANAGTTAGFSEWGGAA and WDSVAPGATDDWGAEPAAPSSDWGTAVTMQEQAKPSTDWA. Residues 216–227 show a composition bias toward low complexity; it reads AALARQQEEANA. Positions 297-310 are enriched in polar residues; the sequence is VTMQEQAKPSTDWA.

The protein belongs to the universal ribosomal protein uS2 family. Component of the small ribosomal subunit. Mature ribosomes consist of a small (40S) and a large (60S) subunit. The 40S subunit contains about 33 different proteins and 1 molecule of RNA (18S). The 60S subunit contains about 49 different proteins and 3 molecules of RNA (28S, 5.8S and 5S). Interacts with ribosomal protein S21.

Its subcellular location is the cytoplasm. Required for the assembly and/or stability of the 40S ribosomal subunit. Required for the processing of the 20S rRNA-precursor to mature 18S rRNA in a late step of the maturation of 40S ribosomal subunits. The polypeptide is Small ribosomal subunit protein uS2 (Nematostella vectensis (Starlet sea anemone)).